Here is a 159-residue protein sequence, read N- to C-terminus: Putative transmembrane protein ORF159 (159 aa).

The next 2 membrane-spanning stretches (helical) occupy residues 20–40 (LLLSLLLLLSTICGVLPLSLF) and 59–79 (IIAVDIASAICFIIFCNGFCC). A Cell attachment site motif is present at residues 106–108 (RGD).

The protein localises to the host membrane. The chain is Putative transmembrane protein ORF159 from Acidianus sp. F28 (AFV-2).